Here is a 366-residue protein sequence, read N- to C-terminus: Galactoside alpha-(1,2)-fucosyltransferase 1 (366 aa).

Residues 1-8 lie on the Cytoplasmic side of the membrane; the sequence is MWPRSHRH. A helical; Signal-anchor for type II membrane protein membrane pass occupies residues 9 to 25; that stretch reads LCLAFLLVCVLSAISFL. The Lumenal segment spans residues 26 to 366; sequence IHFHQDSIRH…LSPLWPLAEP (341 aa). Residues Asn66, Asn302, and Asn328 are each glycosylated (N-linked (GlcNAc...) asparagine).

The protein belongs to the glycosyltransferase 11 family.

The protein localises to the golgi apparatus. Its subcellular location is the golgi stack membrane. It carries out the reaction a beta-D-galactosyl-(1-&gt;4)-N-acetyl-beta-D-glucosaminyl derivative + GDP-beta-L-fucose = an alpha-L-Fuc-(1-&gt;2)-beta-D-Gal-(1-&gt;4)-beta-D-GlcNAc derivative + GDP + H(+). The enzyme catalyses a ganglioside GA1 + GDP-beta-L-fucose = a ganglioside Fuc-GA1 + GDP + H(+). It catalyses the reaction a beta-D-Gal-(1-&gt;3)-beta-D-GlcNAc-(1-&gt;3)-beta-D-Gal-(1-&gt;4)-beta-D-Glc-(1&lt;-&gt;1')-Cer(d18:1(4E)) + GDP-beta-L-fucose = alpha-L-fucosyl-(1-&gt;2)- beta-D-galactosyl-(1-&gt;3)-N-acetyl-beta-D-glucosaminyl-(1-&gt;3)-beta-D-galactosyl-(1-&gt;4)-beta-D-glucosyl-(1&lt;-&gt;1')-N-acylsphing-4-enine + GDP + H(+). The catalysed reaction is a neolactoside nLc4Cer(d18:1(4E)) + GDP-beta-L-fucose = a neolactoside IV(2)-alpha-Fuc-nLc4Cer(d18:1(4E)) + GDP + H(+). It carries out the reaction a ganglioside GM1 + GDP-beta-L-fucose = a ganglioside Fuc-GM1 + GDP + H(+). The enzyme catalyses beta-D-galactosyl-(1-&gt;3)-N-acetyl-D-galactosamine + GDP-beta-L-fucose = alpha-L-fucosyl-(1-&gt;2)-beta-D-galactosyl-(1-&gt;3)-N-acetyl-D-galactosamine + GDP + H(+). Its pathway is protein modification; protein glycosylation. Functionally, catalyzes the transfer of L-fucose, from a guanosine diphosphate-beta-L-fucose, to the terminal galactose residue of glycoconjugates through an alpha(1,2) linkage leading to H antigen synthesis that is an intermediate substrate in the synthesis of ABO blood group antigens. H antigen is essential for maturation of the glomerular layer of the main olfactory bulb, in cell migration and early cell-cell contacts during tumor associated angiogenesis. Preferentially fucosylates soluble lactose and to a lesser extent fucosylates glycolipids gangliosides GA1 and GM1a. This chain is Galactoside alpha-(1,2)-fucosyltransferase 1, found in Saimiri boliviensis boliviensis (Bolivian squirrel monkey).